Reading from the N-terminus, the 332-residue chain is Ribosomal RNA small subunit methyltransferase H (332 aa).

S-adenosyl-L-methionine is bound by residues 38–40 (GGY), D56, F83, D104, and Q111. The tract at residues 309–332 (TETPFSEDISRPDTHIPRSRRQSA) is disordered.

It belongs to the methyltransferase superfamily. RsmH family.

The protein resides in the cytoplasm. It carries out the reaction cytidine(1402) in 16S rRNA + S-adenosyl-L-methionine = N(4)-methylcytidine(1402) in 16S rRNA + S-adenosyl-L-homocysteine + H(+). Specifically methylates the N4 position of cytidine in position 1402 (C1402) of 16S rRNA. In Zymomonas mobilis subsp. mobilis (strain ATCC 31821 / ZM4 / CP4), this protein is Ribosomal RNA small subunit methyltransferase H.